The chain runs to 567 residues: Phosphoglucomutase-like protein 5 (567 aa).

The disordered stretch occupies residues 1-26 (MEGSPIPVLTVPTAPYEDQRPTGGGG). Threonine 120 carries the phosphothreonine modification. Serine 122 is modified (phosphoserine).

The protein belongs to the phosphohexose mutase family. In terms of assembly, interacts with DMD/dystrophin; the interaction is direct. Interacts with UTRN/utrophin.

Its subcellular location is the cell junction. The protein localises to the adherens junction. It is found in the cytoplasm. The protein resides in the cytoskeleton. It localises to the cell membrane. Its subcellular location is the sarcolemma. Functionally, component of adherens-type cell-cell and cell-matrix junctions. Has no phosphoglucomutase activity in vitro. In Rattus norvegicus (Rat), this protein is Phosphoglucomutase-like protein 5.